The following is a 506-amino-acid chain: Histidine--tRNA ligase, mitochondrial (506 aa).

Residues 1-33 constitute a mitochondrion transit peptide; the sequence is MHLLGLLPRRAWASLLSQLLRPPWASCTGAVRC. The residue at position 67 (Ser-67) is a Phosphoserine. Residues 131 to 133, Arg-158, Gln-174, Asp-178, Arg-327, and 331 to 332 each bind L-histidine; these read DLT and YY. An N6-acetyllysine modification is found at Lys-444.

This sequence belongs to the class-II aminoacyl-tRNA synthetase family. Homodimer.

The protein resides in the mitochondrion. It catalyses the reaction tRNA(His) + L-histidine + ATP = L-histidyl-tRNA(His) + AMP + diphosphate + H(+). Mitochondrial aminoacyl-tRNA synthetase that catalyzes the ATP-dependent ligation of histidine to the 3'-end of its cognate tRNA, via the formation of an aminoacyl-adenylate intermediate (His-AMP). This Pongo abelii (Sumatran orangutan) protein is Histidine--tRNA ligase, mitochondrial (HARS2).